A 331-amino-acid chain; its full sequence is Type II secretion system protein K (331 aa).

The propeptide at 1–9 (MPSCRRQGG) is leader sequence. A helical membrane pass occupies residues 8-27 (GGMALLVVLLILSVMVIIAS). Residues 28 to 331 (NMSGRLQLEL…MLRRLNGGAE (304 aa)) lie on the Periplasmic side of the membrane.

It belongs to the GSP K family. In terms of assembly, type II secretion is composed of four main components: the outer membrane complex, the inner membrane complex, the cytoplasmic secretion ATPase and the periplasm-spanning pseudopilus. Interacts with core component ExeG. Post-translationally, cleaved by prepilin peptidase.

It is found in the cell inner membrane. In terms of biological role, component of the type II secretion system required for the energy-dependent secretion of extracellular factors such as proteases and toxins from the periplasm. Plays a role in pseudopilus assembly and seems to control its length. Interacts with the pseudopilus tip complex that is critical for the recognition and binding of secretion substrates. The chain is Type II secretion system protein K (exeK) from Aeromonas hydrophila.